Here is a 317-residue protein sequence, read N- to C-terminus: Aspartate carbamoyltransferase catalytic subunit (317 aa).

Carbamoyl phosphate-binding residues include Arg-65 and Thr-66. Lys-93 contributes to the L-aspartate binding site. Positions 115, 145, and 148 each coordinate carbamoyl phosphate. L-aspartate-binding residues include Arg-178 and Arg-233. Residues Gly-274 and Pro-275 each coordinate carbamoyl phosphate.

Belongs to the aspartate/ornithine carbamoyltransferase superfamily. ATCase family. As to quaternary structure, heterododecamer (2C3:3R2) of six catalytic PyrB chains organized as two trimers (C3), and six regulatory PyrI chains organized as three dimers (R2).

The catalysed reaction is carbamoyl phosphate + L-aspartate = N-carbamoyl-L-aspartate + phosphate + H(+). The protein operates within pyrimidine metabolism; UMP biosynthesis via de novo pathway; (S)-dihydroorotate from bicarbonate: step 2/3. Functionally, catalyzes the condensation of carbamoyl phosphate and aspartate to form carbamoyl aspartate and inorganic phosphate, the committed step in the de novo pyrimidine nucleotide biosynthesis pathway. In Methylobacillus flagellatus (strain ATCC 51484 / DSM 6875 / VKM B-1610 / KT), this protein is Aspartate carbamoyltransferase catalytic subunit.